Reading from the N-terminus, the 21-residue chain is Pseudogermin (21 aa).

The protein belongs to the germin family. Homotetramer.

It localises to the secreted. It is found in the extracellular space. Its subcellular location is the apoplast. The protein localises to the cell wall. In terms of biological role, may subsume the role of germin at the low water potentials during embryogenesis. In Triticum aestivum (Wheat), this protein is Pseudogermin.